The sequence spans 361 residues: POU domain, class 3, transcription factor 4 (361 aa).

Disordered regions lie at residues 99-131 (PHVA…GQPL) and 144-192 (MLEH…PTSD). Positions 119-131 (APNSSITNSGQPL) are enriched in polar residues. Residues 165 to 183 (VLREPPDHGELGSHHCQDH) are compositionally biased toward basic and acidic residues. A POU-specific domain is found at 186–260 (EETPTSDELE…LLNKWLEEAD (75 aa)). Position 265 is a phosphoserine (serine 265). The homeobox DNA-binding region spans 278–337 (KRKKRTSIEVSVKGVLETHFLKCPKPAAQEISSLADSLQLEKEVVRVWFCNRRQKEKRMT). A disordered region spans residues 334-361 (KRMTPPGDQQPHEVYSHTVKTDASCHDL). A compositionally biased stretch (basic and acidic residues) spans 343-361 (QPHEVYSHTVKTDASCHDL).

Belongs to the POU transcription factor family. Class-3 subfamily.

It is found in the nucleus. Probable transcription factor which exert its primary action widely during early neural development and in a very limited set of neurons in the mature brain. The polypeptide is POU domain, class 3, transcription factor 4 (Pou3f4) (Mesocricetus auratus (Golden hamster)).